The sequence spans 382 residues: Probable inactive dehydrogenase easA (382 aa).

FMN is bound by residues 25 to 27 (PMT), Ala-60, Gln-102, and His-171. Substrate-binding residues include His-171 and Asn-174. FMN is bound by residues Lys-223, Gly-299, 324-325 (GR), and Arg-325. Tyr-352 contributes to the substrate binding site.

It belongs to the NADH:flavin oxidoreductase/NADH oxidase family.

In terms of biological role, probable inactive dehydrogenase; part of the gene cluster that mediates the biosynthesis of fungal ergot alkaloid. DmaW catalyzes the first step of ergot alkaloid biosynthesis by condensing dimethylallyl diphosphate (DMAP) and tryptophan to form 4-dimethylallyl-L-tryptophan. The second step is catalyzed by the methyltransferase easF that methylates 4-dimethylallyl-L-tryptophan in the presence of S-adenosyl-L-methionine, resulting in the formation of 4-dimethylallyl-L-abrine. The catalase easC and the FAD-dependent oxidoreductase easE then transform 4-dimethylallyl-L-abrine to chanoclavine-I which is further oxidized by easD in the presence of NAD(+), resulting in the formation of chanoclavine-I aldehyde. Agroclavine dehydrogenase easG then mediates the conversion of chanoclavine-I aldehyde to agroclavine via a non-enzymatic adduct reaction: the substrate is an iminium intermediate that is formed spontaneously from chanoclavine-I aldehyde in the presence of glutathione. Further conversion of agroclavine to paspalic acid is a two-step process involving oxidation of agroclavine to elymoclavine and of elymoclavine to paspalic acid, the second step being performed by the elymoclavine oxidase cloA. However, cloA does not encode a functional enzyme indicating that C.fusiformis terminates its ergot alkaloid pathway at elymoclavine. This Claviceps fusiformis (Ergot fungus) protein is Probable inactive dehydrogenase easA.